Here is a 402-residue protein sequence, read N- to C-terminus: GDSL esterase/lipase At1g20120 (402 aa).

The first 35 residues, 1 to 35, serve as a signal peptide directing secretion; it reads MLQDRVSGSLSSSKISRCVLFLSLFCFFLLTMHAS. The segment at 41–69 is disordered; that stretch reads RVPNPGPSPAPEPKPCPSPGPNPAPATTK. Residues 44-64 are compositionally biased toward pro residues; sequence NPGPSPAPEPKPCPSPGPNPA. N-linked (GlcNAc...) asparagine glycosylation occurs at N73. The Nucleophile role is filled by S85. N314 and N367 each carry an N-linked (GlcNAc...) asparagine glycan. Active-site residues include D375 and H378.

Belongs to the 'GDSL' lipolytic enzyme family.

It localises to the secreted. The chain is GDSL esterase/lipase At1g20120 from Arabidopsis thaliana (Mouse-ear cress).